Reading from the N-terminus, the 280-residue chain is Adenosylcobinamide-GDP ribazoletransferase (280 aa).

7 helical membrane passes run Tyr4 to Met24, Ile34 to Ala54, Val58 to Phe78, Thr108 to Ile128, Ile136 to Val156, Leu197 to Ile217, and Ile254 to Gly274.

This sequence belongs to the CobS family. It depends on Mg(2+) as a cofactor.

It localises to the cell membrane. The catalysed reaction is alpha-ribazole + adenosylcob(III)inamide-GDP = adenosylcob(III)alamin + GMP + H(+). The enzyme catalyses alpha-ribazole 5'-phosphate + adenosylcob(III)inamide-GDP = adenosylcob(III)alamin 5'-phosphate + GMP + H(+). It functions in the pathway cofactor biosynthesis; adenosylcobalamin biosynthesis; adenosylcobalamin from cob(II)yrinate a,c-diamide: step 7/7. Joins adenosylcobinamide-GDP and alpha-ribazole to generate adenosylcobalamin (Ado-cobalamin). Also synthesizes adenosylcobalamin 5'-phosphate from adenosylcobinamide-GDP and alpha-ribazole 5'-phosphate. The protein is Adenosylcobinamide-GDP ribazoletransferase of Methanosarcina mazei (strain ATCC BAA-159 / DSM 3647 / Goe1 / Go1 / JCM 11833 / OCM 88) (Methanosarcina frisia).